The sequence spans 117 residues: MDKKSARIRRATRARRKLQELGATRLVVHRTPRHIYAQVIAPNGSEVLVAASTVEKAISEQLKYTGNKDAAAAVGKAVAERALEKGIKDVSFDRSGFQYHGRVQALADAAREAGLQF.

It belongs to the universal ribosomal protein uL18 family. Part of the 50S ribosomal subunit; part of the 5S rRNA/L5/L18/L25 subcomplex. Contacts the 5S and 23S rRNAs.

This is one of the proteins that bind and probably mediate the attachment of the 5S RNA into the large ribosomal subunit, where it forms part of the central protuberance. This chain is Large ribosomal subunit protein uL18, found in Klebsiella pneumoniae (strain 342).